A 412-amino-acid polypeptide reads, in one-letter code: Multifunctional CCA protein (412 aa).

Residues G8 and R11 each coordinate ATP. 2 residues coordinate CTP: G8 and R11. Mg(2+) contacts are provided by D21 and D23. 3 residues coordinate ATP: R91, R137, and R140. The CTP site is built by R91, R137, and R140. Residues 228 to 329 (TGIHTLMTLS…VKLFDSIDAW (102 aa)) enclose the HD domain.

Belongs to the tRNA nucleotidyltransferase/poly(A) polymerase family. Bacterial CCA-adding enzyme type 1 subfamily. In terms of assembly, monomer. Can also form homodimers and oligomers. Mg(2+) is required as a cofactor. Ni(2+) serves as cofactor.

It catalyses the reaction a tRNA precursor + 2 CTP + ATP = a tRNA with a 3' CCA end + 3 diphosphate. It carries out the reaction a tRNA with a 3' CCA end + 2 CTP + ATP = a tRNA with a 3' CCACCA end + 3 diphosphate. Functionally, catalyzes the addition and repair of the essential 3'-terminal CCA sequence in tRNAs without using a nucleic acid template. Adds these three nucleotides in the order of C, C, and A to the tRNA nucleotide-73, using CTP and ATP as substrates and producing inorganic pyrophosphate. tRNA 3'-terminal CCA addition is required both for tRNA processing and repair. Also involved in tRNA surveillance by mediating tandem CCA addition to generate a CCACCA at the 3' terminus of unstable tRNAs. While stable tRNAs receive only 3'-terminal CCA, unstable tRNAs are marked with CCACCA and rapidly degraded. The chain is Multifunctional CCA protein from Shigella sonnei (strain Ss046).